A 169-amino-acid polypeptide reads, in one-letter code: Calfumirin-1 (169 aa).

4 consecutive EF-hand domains span residues Asn6–Phe41, Asn42–Leu77, Glu93–Lys128, and Asp129–Leu164. Ca(2+) contacts are provided by Asp19, Asn21, Asp23, Glu25, Glu30, Asp55, Asp57, Asp59, Lys61, Glu66, Asp108, Asn110, Asp112, Glu117, Asp142, Asn144, Asp146, Thr148, and Glu153.

Functionally, may be involved in the phase-shift of cells from growth to differentiation. This chain is Calfumirin-1 (cafA), found in Dictyostelium discoideum (Social amoeba).